We begin with the raw amino-acid sequence, 406 residues long: DNA-binding transcriptional repressor Mlc (406 aa).

The H-T-H motif DNA-binding region spans 33–42 (RIDLSRLAQL). Residues histidine 247, cysteine 257, cysteine 259, and cysteine 264 each coordinate Zn(2+).

This sequence belongs to the ROK (NagC/XylR) family. As to quaternary structure, homodimer. Homotetramer. There is probably an equilibrium between the dimeric and the tetrameric form. Interacts with dephosphorylated PtsG. Mlc and PtsG EIIB domain form a complex with the 1:1 stoichiometry. Interacts with MtfA.

It localises to the cytoplasm. With respect to regulation, activity is modulated by glucose. In the presence of glucose, is inhibited by interaction with the dephosphorylated form of PtsG, which sequesters Mlc in the inner membrane and prevents Mlc binding to its target promoters. The restriction of conformational freedom resulting from the anchoring of four ends of Mlc to the membrane could be the primary cause of its loss of DNA-binding activity in vivo. Activity is also inhibited by interaction with the Mlc titration factor A (mtfA). The inactivation mechanisms of Mlc by dephosphorylated PtsG and MtfA differ significantly. Its function is as follows. Global regulator of carbohydrate metabolism. Represses the expression of several genes involved in sugar transport and utilization, in particular phosphoenolpyruvate-carbohydrate phosphotransferase system (PTS) genes. Represses expression of ptsG (EIICB(Glc)), which encodes the PTS system glucose-specific EIICB component. Also represses the expression of the manXYZ operon, encoding the mannose-specific PTS system, expression of malT, encoding the transcriptional activator of the maltose regulon, and expression of the pts operon, composed of the genes ptsH, ptsI and crr. Represses its own expression. Acts by binding to the regulatory region of the target genes. This Escherichia coli (strain K12) protein is DNA-binding transcriptional repressor Mlc.